A 634-amino-acid chain; its full sequence is MLCCMRICVCGDEGTGKSSLITSLVKGVFVTNKIQPILPQITIPPTIGTPENVTTTTVVDTSAVPQERSNLAREIRKSNVILLVYSDHYSYERVALFWLPYFRSLGVNVPVVLCANKSDLAADHTETQVIEDEMLPLMSEFKEIDSCIRTSAREHRNVNEAFFLCQKAVTHPIAPLFDAKESALKPAAVAALQRIFYLSDKDRDGYLSDKEIKDFQMRCFEKPLSEEDLVHIKETIQKTHPDSVTPSGIDCRGFIHLNKMYAEKGRHETVWIILRAFQYTDSLSLQESYLHPKFEVPPFASAELSPEGYRFFVNLFLLSDKDNDGGLNDAELASLFAPTPGLPPSWADGSFPSCTVRNEAGHVTLQGWLAQWSMTTFTSPKTTLEYLAYLGFESSDRSNPSTTAALKVTRPRKRRKRPGRVGRNVVLGHIVGAPGSGKSALLDAFLSRGFSTTYHPTIQPRTAVNTVELPGGKQCYLIMDELGELEPAILENQAKLLDQCDVIVYTYDSSDPDSFAYIPALRAKYPHLEELPSVYIALKADLDRTTQRAEHQPHEYTALLNMPGPPLHVSVTWSSIQEVFVHIAEAAMEPSTAFPRSEEDVEGKWMSWGIALGAVVCAGAAAVMIWRRVSGSGV.

The Cytoplasmic segment spans residues 1–604; it reads MLCCMRICVC…PRSEEDVEGK (604 aa). The 170-residue stretch at 2 to 171 folds into the Miro 1 domain; that stretch reads LCCMRICVCG…FFLCQKAVTH (170 aa). GTP-binding positions include 11 to 18, 60 to 64, and 116 to 119; these read GDEGTGKS, DTSAV, and NKSD. EF-hand domains are found at residues 187 to 222 and 307 to 342; these read AAVA…CFEK and EGYR…TPGL. Ca(2+) contacts are provided by Asp200, Asp202, Asp204, Tyr206, Glu211, Asp320, Asp322, Asp324, and Glu331. The interval 399 to 419 is disordered; the sequence is NPSTTAALKVTRPRKRRKRPG. The segment covering 409-419 has biased composition (basic residues); it reads TRPRKRRKRPG. A Miro 2 domain is found at 423-589; sequence RNVVLGHIVG…FVHIAEAAME (167 aa). GTP is bound by residues 432–439, 468–472, and 538–541; these read GAPGSGKS, ELPGG, and LKAD. A helical; Anchor for type IV membrane protein membrane pass occupies residues 605–625; the sequence is WMSWGIALGAVVCAGAAAVMI. Residues 626 to 634 are Mitochondrial intermembrane-facing; it reads WRRVSGSGV.

It belongs to the mitochondrial Rho GTPase family.

The protein localises to the mitochondrion outer membrane. Functionally, mitochondrial GTPase involved in mitochondrial trafficking. Probably involved in control of anterograde transport of mitochondria and their subcellular distribution. The sequence is that of Mitochondrial Rho GTPase 1 (gem1) from Emericella nidulans (strain FGSC A4 / ATCC 38163 / CBS 112.46 / NRRL 194 / M139) (Aspergillus nidulans).